A 346-amino-acid polypeptide reads, in one-letter code: Glycerol-3-phosphate dehydrogenase [NAD(P)+] (346 aa).

Residues Ser11, Trp12, His32, Arg33, and Lys106 each contribute to the NADPH site. Residues Lys106, Gly137, and Ser139 each contribute to the sn-glycerol 3-phosphate site. Ala141 provides a ligand contact to NADPH. Sn-glycerol 3-phosphate-binding residues include Lys193, Asp246, Ser256, Arg257, and Asn258. Catalysis depends on Lys193, which acts as the Proton acceptor. Arg257 is an NADPH binding site. Residues Val281 and Glu283 each coordinate NADPH.

Belongs to the NAD-dependent glycerol-3-phosphate dehydrogenase family.

Its subcellular location is the cytoplasm. It catalyses the reaction sn-glycerol 3-phosphate + NAD(+) = dihydroxyacetone phosphate + NADH + H(+). It carries out the reaction sn-glycerol 3-phosphate + NADP(+) = dihydroxyacetone phosphate + NADPH + H(+). Its pathway is membrane lipid metabolism; glycerophospholipid metabolism. In terms of biological role, catalyzes the reduction of the glycolytic intermediate dihydroxyacetone phosphate (DHAP) to sn-glycerol 3-phosphate (G3P), the key precursor for phospholipid synthesis. The polypeptide is Glycerol-3-phosphate dehydrogenase [NAD(P)+] (Bacillus licheniformis (strain ATCC 14580 / DSM 13 / JCM 2505 / CCUG 7422 / NBRC 12200 / NCIMB 9375 / NCTC 10341 / NRRL NRS-1264 / Gibson 46)).